The chain runs to 352 residues: Ion-translocating oxidoreductase complex subunit D (352 aa).

5 helical membrane-spanning segments follow: residues 20–40, 42–62, 78–109, 123–143, and 148–168; these read IMLL…WFFG, GTLV…ALVL, ALLT…VIIA, PAMI…TSWL, and IAVN…GHTA. Thr187 is modified (FMN phosphoryl threonine). 5 helical membrane-spanning segments follow: residues 214–234, 242–262, 267–287, 301–321, and 322–342; these read ILAG…GLWL, WHIP…GWLF, LAAP…FFIL, LIFG…GGYP, and DGVA…DYYT.

Belongs to the NqrB/RnfD family. The complex is composed of six subunits: RsxA, RsxB, RsxC, RsxD, RsxE and RsxG. FMN is required as a cofactor.

The protein localises to the cell inner membrane. Functionally, part of a membrane-bound complex that couples electron transfer with translocation of ions across the membrane. Required to maintain the reduced state of SoxR. This chain is Ion-translocating oxidoreductase complex subunit D, found in Escherichia coli (strain SE11).